The chain runs to 72 residues: Translation initiation factor IF-1 (72 aa).

An S1-like domain is found at 1–72; the sequence is MAKDDVIEVD…DKGRITFRYK (72 aa).

The protein belongs to the IF-1 family. As to quaternary structure, component of the 30S ribosomal translation pre-initiation complex which assembles on the 30S ribosome in the order IF-2 and IF-3, IF-1 and N-formylmethionyl-tRNA(fMet); mRNA recruitment can occur at any time during PIC assembly.

The protein localises to the cytoplasm. One of the essential components for the initiation of protein synthesis. Stabilizes the binding of IF-2 and IF-3 on the 30S subunit to which N-formylmethionyl-tRNA(fMet) subsequently binds. Helps modulate mRNA selection, yielding the 30S pre-initiation complex (PIC). Upon addition of the 50S ribosomal subunit IF-1, IF-2 and IF-3 are released leaving the mature 70S translation initiation complex. In Wolinella succinogenes (strain ATCC 29543 / DSM 1740 / CCUG 13145 / JCM 31913 / LMG 7466 / NCTC 11488 / FDC 602W) (Vibrio succinogenes), this protein is Translation initiation factor IF-1.